We begin with the raw amino-acid sequence, 190 residues long: Potassium-transporting ATPase KdpC subunit (190 aa).

The helical transmembrane segment at Thr-10–Gly-30 threads the bilayer.

Belongs to the KdpC family. As to quaternary structure, the system is composed of three essential subunits: KdpA, KdpB and KdpC.

It localises to the cell inner membrane. Part of the high-affinity ATP-driven potassium transport (or Kdp) system, which catalyzes the hydrolysis of ATP coupled with the electrogenic transport of potassium into the cytoplasm. This subunit acts as a catalytic chaperone that increases the ATP-binding affinity of the ATP-hydrolyzing subunit KdpB by the formation of a transient KdpB/KdpC/ATP ternary complex. The polypeptide is Potassium-transporting ATPase KdpC subunit (Escherichia coli (strain K12 / MC4100 / BW2952)).